We begin with the raw amino-acid sequence, 172 residues long: Histone H1-like protein HC2 (172 aa).

Residues Met1–Lys77 form a disordered region. The span at Gln8–Lys77 shows a compositional bias: basic residues.

Belongs to the histone H1/H5 family. HCT subfamily.

Might have a role in establishing the nucleoid structure of elementary bodies. This Chlamydia pneumoniae (Chlamydophila pneumoniae) protein is Histone H1-like protein HC2 (hctB).